Here is a 477-residue protein sequence, read N- to C-terminus: PTS system glucose-specific EIICB component (477 aa).

The region spanning 1 to 388 is the PTS EIIC type-1 domain; it reads MFKNVFANLQ…FNLDTPGREN (388 aa). 10 consecutive transmembrane segments (helical) span residues 15 to 35, 51 to 71, 76 to 96, 112 to 132, 152 to 172, 191 to 211, 250 to 270, 280 to 300, 304 to 324, and 357 to 377; these read SLML…IGSA, TGGS…ALGF, GVAA…LTAV, HLSD…AYMF, FVPI…SLIW, PILA…FGLH, LSGG…AIWH, IGSI…TEPI, FIIV…LSFP, and FPII…LFII. The region spanning 399–477 is the PTS EIIB type-1 domain; sequence NEIAPYIITA…TAMDECIKNI (79 aa). The active-site Phosphocysteine intermediate; for EIIB activity is C421. The residue at position 421 (C421) is a Phosphocysteine.

It is found in the cell inner membrane. The catalysed reaction is N(pros)-phospho-L-histidyl-[protein] + D-glucose(out) = D-glucose 6-phosphate(in) + L-histidyl-[protein]. The phosphoenolpyruvate-dependent sugar phosphotransferase system (sugar PTS), a major carbohydrate active transport system, catalyzes the phosphorylation of incoming sugar substrates concomitantly with their translocation across the cell membrane. The enzyme II complex composed of PtsG and Crr is involved in glucose transport. This is PTS system glucose-specific EIICB component (ptsG) from Buchnera aphidicola subsp. Acyrthosiphon pisum (strain APS) (Acyrthosiphon pisum symbiotic bacterium).